The sequence spans 301 residues: Cilia- and flagella-associated protein 161 (301 aa).

The protein resides in the cytoplasm. Its subcellular location is the cytoskeleton. It localises to the cilium axoneme. In terms of biological role, microtubule inner protein (MIP) part of the dynein-decorated doublet microtubules (DMTs) in cilia axoneme, which is required for motile cilia beating. The sequence is that of Cilia- and flagella-associated protein 161 from Danio rerio (Zebrafish).